Consider the following 343-residue polypeptide: MKTSDFDYNLPQEYIAQKPVEPRDSSRLLVLNRQSGELTNRIFGEITDYFKPGDVLVMNDSRVLPARIKGIKQDTSAKIEILLLKRDGEGCWEALLKPGKRTKPGTIIDIHQKGGVVSIQAEVLADKEDGIKLLRFSDETHLMKLGEVPLPPYIHTPVADPERYQTVYALTNGSVAAPTAGLHFTPELLKRLTEMGVICTYVTLHIGLDTFRPVKEEDPKDHKIHREYGILSKETASAICCAKETGKRVFCVGTSATRLVEQASHLSQTSLITSYSGWADLFILPGYKFRVADCFITNFHLPRSTPLMLTSAFAGWPFLRKAYEKAISEHYRFYSFGDAMLIL.

The protein belongs to the QueA family. As to quaternary structure, monomer.

The protein resides in the cytoplasm. The catalysed reaction is 7-aminomethyl-7-carbaguanosine(34) in tRNA + S-adenosyl-L-methionine = epoxyqueuosine(34) in tRNA + adenine + L-methionine + 2 H(+). It functions in the pathway tRNA modification; tRNA-queuosine biosynthesis. Transfers and isomerizes the ribose moiety from AdoMet to the 7-aminomethyl group of 7-deazaguanine (preQ1-tRNA) to give epoxyqueuosine (oQ-tRNA). The sequence is that of S-adenosylmethionine:tRNA ribosyltransferase-isomerase from Dehalococcoides mccartyi (strain CBDB1).